A 705-amino-acid chain; its full sequence is Probable E3 ubiquitin-protein ligase MID2 (705 aa).

The segment at 30–80 (CPICLELFEDPLLLPCAHSLCFSCAHRILVSSCSSGESIEPITAFQCPTCR) adopts an RING-type zinc-finger fold. The B box-type 1; degenerate zinc finger occupies 137–184 (IACQFCEQDPPRDAVKTCITCEVSYCDRCLRATHPNKKPFTSHRLVEP). The B box-type 2 zinc finger occupies 190 to 232 (LRGITCLDHENEKVNMYCVSDDQLICALCKLVGRHRDHQVASL). 4 residues coordinate Zn(2+): C195, H198, C218, and H224. Positions 233-301 (NDRFEKLKQT…IIQQRKQMIA (69 aa)) form a coiled coil. The 60-residue stretch at 340–399 (LKENDQARFLQSAKNIAERVAMATASSQVLIPDINFNDAFENFALDFSREKKLLEGLDYL) folds into the COS domain. Positions 404–504 (PPSIREELCT…EPTRLKTNSQ (101 aa)) constitute a Fibronectin type-III domain. One can recognise a B30.2/SPRY domain in the interval 486–679 (INQAGSRNSE…ILSGLPAPDF (194 aa)).

The protein belongs to the TRIM/RBCC family. As to quaternary structure, homodimer or heterodimer with MID1. Interacts with IGBP1. In terms of processing, phosphorylated on serine and threonine residues. As to expression, low abundance in brain and lung, with even lower levels in heart, liver, and kidney.

The protein localises to the cytoplasm. Its subcellular location is the cytoskeleton. The catalysed reaction is S-ubiquitinyl-[E2 ubiquitin-conjugating enzyme]-L-cysteine + [acceptor protein]-L-lysine = [E2 ubiquitin-conjugating enzyme]-L-cysteine + N(6)-ubiquitinyl-[acceptor protein]-L-lysine.. It participates in protein modification; protein ubiquitination. Functionally, E3 ubiquitin ligase that plays a role in microtubule stabilization. Mediates the 'Lys-48'-linked polyubiquitination of LRRK2 to drive its localization to microtubules and its proteasomal degradation in neurons. This ubiquitination inhibits LRRK2 kinase activation by RAB29. The polypeptide is Probable E3 ubiquitin-protein ligase MID2 (Mid2) (Mus musculus (Mouse)).